The chain runs to 620 residues: uncharacterized protein (620 aa).

4 helical membrane-spanning segments follow: residues 66-86, 238-258, 546-566, and 584-604; these read LLNF…NQII, FFDA…NLLW, LGII…VWTI, and IIFI…ILVF.

It is found in the cell membrane. This is an uncharacterized protein from Mycoplasma genitalium (strain ATCC 33530 / DSM 19775 / NCTC 10195 / G37) (Mycoplasmoides genitalium).